The chain runs to 428 residues: D-amino acid dehydrogenase (428 aa).

FAD is bound at residue 3–17 (VVILGSGVVGVASAY).

The protein belongs to the DadA oxidoreductase family. It depends on FAD as a cofactor.

The catalysed reaction is a D-alpha-amino acid + A + H2O = a 2-oxocarboxylate + AH2 + NH4(+). It participates in amino-acid degradation; D-alanine degradation; NH(3) and pyruvate from D-alanine: step 1/1. Its function is as follows. Oxidative deamination of D-amino acids. The protein is D-amino acid dehydrogenase of Burkholderia thailandensis (strain ATCC 700388 / DSM 13276 / CCUG 48851 / CIP 106301 / E264).